We begin with the raw amino-acid sequence, 315 residues long: Phosphatidylglycerol--prolipoprotein diacylglyceryl transferase (315 aa).

A run of 2 helical transmembrane segments spans residues 19 to 39 and 93 to 113; these read FTIH…VWIL and VWEG…VAFL. Arg141 serves as a coordination point for a 1,2-diacyl-sn-glycero-3-phospho-(1'-sn-glycerol). Transmembrane regions (helical) follow at residues 188–208 and 256–276; these read LFHP…ALII and VWTA…LYQY.

Belongs to the Lgt family.

The protein resides in the cell membrane. The catalysed reaction is L-cysteinyl-[prolipoprotein] + a 1,2-diacyl-sn-glycero-3-phospho-(1'-sn-glycerol) = an S-1,2-diacyl-sn-glyceryl-L-cysteinyl-[prolipoprotein] + sn-glycerol 1-phosphate + H(+). It participates in protein modification; lipoprotein biosynthesis (diacylglyceryl transfer). Its function is as follows. Catalyzes the transfer of the diacylglyceryl group from phosphatidylglycerol to the sulfhydryl group of the N-terminal cysteine of a prolipoprotein, the first step in the formation of mature lipoproteins. The protein is Phosphatidylglycerol--prolipoprotein diacylglyceryl transferase of Bifidobacterium longum (strain DJO10A).